Reading from the N-terminus, the 560-residue chain is Cytosolic purine 5'-nucleotidase (560 aa).

The active-site Nucleophile is Asp52. Asp52 and Asp54 together coordinate IMP. Residues Asp52 and Asp54 each contribute to the Mg(2+) site. The Proton donor role is filled by Asp54. The ATP site is built by Arg144 and Asn154. Positions 202, 206, 215, 249, 250, 251, and 292 each coordinate IMP. Mg(2+) is bound at residue Asp351. Position 418 is a phosphoserine (Ser418). ATP is bound by residues Gln453 and Arg456. Phosphoserine occurs at positions 502, 511, and 527. A disordered region spans residues 541–560 (PQEITHCHDEDDDEEEEEEE). Residues 548-560 (HDEDDDEEEEEEE) form a required for tetramer assembly region. Residues 550 to 560 (EDDDEEEEEEE) are compositionally biased toward acidic residues.

The protein belongs to the 5'(3')-deoxyribonucleotidase family. Homotetramer. The cofactor is Mg(2+).

The protein localises to the cytoplasm. The protein resides in the cytosol. The catalysed reaction is a ribonucleoside 5'-phosphate + H2O = a ribonucleoside + phosphate. The enzyme catalyses a 2'-deoxyribonucleoside + a ribonucleoside 5'-phosphate = a ribonucleoside + a 2'-deoxyribonucleoside 5'-phosphate. It carries out the reaction IMP + H2O = inosine + phosphate. It catalyses the reaction GMP + H2O = guanosine + phosphate. The catalysed reaction is dIMP + H2O = 2'-deoxyinosine + phosphate. The enzyme catalyses dGMP + H2O = 2'-deoxyguanosine + phosphate. It carries out the reaction XMP + H2O = xanthosine + phosphate. It catalyses the reaction inosine + GMP = guanosine + IMP. The catalysed reaction is dGMP + inosine = 2'-deoxyguanosine + IMP. The enzyme catalyses dIMP + inosine = 2'-deoxyinosine + IMP. It carries out the reaction inosine + UMP = uridine + IMP. It catalyses the reaction inosine + CMP = cytidine + IMP. The catalysed reaction is inosine + AMP = IMP + adenosine. With respect to regulation, allosterically activated by various compounds including ATP, 2,3-BPG/2,3-Bisphosphoglyceric acid and Ap4A/P1,P4-bis(5'-adenosyl) tetraphosphate. Binding of an allosteric activator is a prerequisiste to magnesium and substrate binding. Inhibited by inorganic phosphate. Broad specificity cytosolic 5'-nucleotidase that catalyzes the dephosphorylation of 6-hydroxypurine nucleoside 5'-monophosphates. In addition, possesses a phosphotransferase activity by which it can transfer a phosphate from a donor nucleoside monophosphate to an acceptor nucleoside, preferably inosine, deoxyinosine and guanosine. Has the highest activities for IMP and GMP followed by dIMP, dGMP and XMP. Could also catalyze the transfer of phosphates from pyrimidine monophosphates but with lower efficiency. Through these activities regulates the purine nucleoside/nucleotide pools within the cell. The sequence is that of Cytosolic purine 5'-nucleotidase from Rattus norvegicus (Rat).